Consider the following 338-residue polypeptide: Phosphatidate cytidylyltransferase, mitochondrial (338 aa).

It belongs to the TAM41 family. Mg(2+) serves as cofactor.

The protein localises to the mitochondrion inner membrane. The catalysed reaction is a 1,2-diacyl-sn-glycero-3-phosphate + CTP + H(+) = a CDP-1,2-diacyl-sn-glycerol + diphosphate. The protein operates within phospholipid metabolism; CDP-diacylglycerol biosynthesis; CDP-diacylglycerol from sn-glycerol 3-phosphate: step 3/3. In terms of biological role, catalyzes the conversion of phosphatidic acid (PA) to CDP-diacylglycerol (CDP-DAG), an essential intermediate in the synthesis of phosphatidylglycerol, cardiolipin and phosphatidylinositol. This chain is Phosphatidate cytidylyltransferase, mitochondrial (tamm41), found in Danio rerio (Zebrafish).